Reading from the N-terminus, the 138-residue chain is Holo-[acyl-carrier-protein] synthase (138 aa).

Mg(2+) is bound by residues aspartate 8 and glutamate 54.

The protein belongs to the P-Pant transferase superfamily. AcpS family. Mg(2+) is required as a cofactor.

It localises to the cytoplasm. The catalysed reaction is apo-[ACP] + CoA = holo-[ACP] + adenosine 3',5'-bisphosphate + H(+). Functionally, transfers the 4'-phosphopantetheine moiety from coenzyme A to a Ser of acyl-carrier-protein. The polypeptide is Holo-[acyl-carrier-protein] synthase (Roseiflexus sp. (strain RS-1)).